The sequence spans 85 residues: Serine protease inhibitor Cvsi-2 (85 aa).

A signal peptide spans 1–18 (MKVAVVVALLCFVCYTAA).

Post-translationally, contains 6 disulfide bonds. In terms of tissue distribution, detected in hemolymph (at protein level). Within the digestive gland expression is limited to the basophil cells of the digestive diverticula.

Its subcellular location is the secreted. In terms of biological role, slow-binding inhibitor of serine proteases. The inhibitor rapidly binds to the protease forming a weak enzyme-inhibitor complex, and this is followed by a slow isomerization forming a tight-binding enzyme-inhibitor complex. Active against subtilisin A with a dissociation constant of 0.18 nM. Active against perkinsin. Not active against thermolysin, papain or pepsin. The protein is Serine protease inhibitor Cvsi-2 of Crassostrea virginica (Eastern oyster).